The chain runs to 369 residues: Protein FAM187B (369 aa).

An N-terminal signal peptide occupies residues 1–17 (MPPMLWLLLHFAAPALG). Over 18 to 335 (FYFSISCPSG…RADSVLKGLK (318 aa)) the chain is Extracellular. Asparagine 45, asparagine 68, and asparagine 130 each carry an N-linked (GlcNAc...) asparagine glycan. A helical transmembrane segment spans residues 336–356 (LVLLVVTVLALLGALLKCIHP). Topologically, residues 357-369 (SPGRRSTQVLVVK) are cytoplasmic.

It belongs to the FAM187 family.

The protein resides in the membrane. The protein is Protein FAM187B (FAM187B) of Homo sapiens (Human).